The primary structure comprises 82 residues: Small ribosomal subunit protein uS17 (82 aa).

It belongs to the universal ribosomal protein uS17 family. In terms of assembly, part of the 30S ribosomal subunit.

Its function is as follows. One of the primary rRNA binding proteins, it binds specifically to the 5'-end of 16S ribosomal RNA. This chain is Small ribosomal subunit protein uS17, found in Nitrobacter winogradskyi (strain ATCC 25391 / DSM 10237 / CIP 104748 / NCIMB 11846 / Nb-255).